Here is a 169-residue protein sequence, read N- to C-terminus: uncharacterized protein (169 aa).

Residues 28–157 (ELHLVVHVCI…EFIPYFFLNQ (130 aa)) form the Nudix hydrolase domain. Residues 65 to 87 (AGSALKGETSRQAAEREVKEELG) carry the Nudix box motif. The Mg(2+) site is built by Glu81 and Glu85.

It belongs to the Nudix hydrolase family. Mg(2+) is required as a cofactor.

This is an uncharacterized protein from Listeria innocua serovar 6a (strain ATCC BAA-680 / CLIP 11262).